Reading from the N-terminus, the 352-residue chain is 4-hydroxy-3-methylbut-2-en-1-yl diphosphate synthase (flavodoxin) (352 aa).

Residues Cys262, Cys265, Cys297, and Glu304 each contribute to the [4Fe-4S] cluster site.

This sequence belongs to the IspG family. The cofactor is [4Fe-4S] cluster.

The catalysed reaction is (2E)-4-hydroxy-3-methylbut-2-enyl diphosphate + oxidized [flavodoxin] + H2O + 2 H(+) = 2-C-methyl-D-erythritol 2,4-cyclic diphosphate + reduced [flavodoxin]. The protein operates within isoprenoid biosynthesis; isopentenyl diphosphate biosynthesis via DXP pathway; isopentenyl diphosphate from 1-deoxy-D-xylulose 5-phosphate: step 5/6. In terms of biological role, converts 2C-methyl-D-erythritol 2,4-cyclodiphosphate (ME-2,4cPP) into 1-hydroxy-2-methyl-2-(E)-butenyl 4-diphosphate. The sequence is that of 4-hydroxy-3-methylbut-2-en-1-yl diphosphate synthase (flavodoxin) from Campylobacter curvus (strain 525.92).